The following is a 451-amino-acid chain: Exodeoxyribonuclease 7 large subunit (451 aa).

It belongs to the XseA family. Heterooligomer composed of large and small subunits.

The protein localises to the cytoplasm. The enzyme catalyses Exonucleolytic cleavage in either 5'- to 3'- or 3'- to 5'-direction to yield nucleoside 5'-phosphates.. Bidirectionally degrades single-stranded DNA into large acid-insoluble oligonucleotides, which are then degraded further into small acid-soluble oligonucleotides. In Neisseria gonorrhoeae (strain ATCC 700825 / FA 1090), this protein is Exodeoxyribonuclease 7 large subunit.